A 305-amino-acid chain; its full sequence is Oxygen-dependent coproporphyrinogen-III oxidase (305 aa).

S97 is a substrate binding site. A divalent metal cation-binding residues include H101 and H111. H111 functions as the Proton donor in the catalytic mechanism. Position 113 to 115 (113 to 115 (NVR)) interacts with substrate. Positions 150 and 180 each coordinate a divalent metal cation. An important for dimerization region spans residues 245 to 280 (YVEFNLVWDRGTHFGLQSGGRTESILLSMPPLASWA). Residue 263-265 (GGR) participates in substrate binding.

It belongs to the aerobic coproporphyrinogen-III oxidase family. Homodimer. A divalent metal cation serves as cofactor.

The protein resides in the cytoplasm. It catalyses the reaction coproporphyrinogen III + O2 + 2 H(+) = protoporphyrinogen IX + 2 CO2 + 2 H2O. It functions in the pathway porphyrin-containing compound metabolism; protoporphyrin-IX biosynthesis; protoporphyrinogen-IX from coproporphyrinogen-III (O2 route): step 1/1. Functionally, involved in the heme biosynthesis. Catalyzes the aerobic oxidative decarboxylation of propionate groups of rings A and B of coproporphyrinogen-III to yield the vinyl groups in protoporphyrinogen-IX. The chain is Oxygen-dependent coproporphyrinogen-III oxidase from Variovorax paradoxus (strain S110).